The primary structure comprises 475 residues: Aspartyl/glutamyl-tRNA(Asn/Gln) amidotransferase subunit B (475 aa).

This sequence belongs to the GatB/GatE family. GatB subfamily. Heterotrimer of A, B and C subunits.

It carries out the reaction L-glutamyl-tRNA(Gln) + L-glutamine + ATP + H2O = L-glutaminyl-tRNA(Gln) + L-glutamate + ADP + phosphate + H(+). The catalysed reaction is L-aspartyl-tRNA(Asn) + L-glutamine + ATP + H2O = L-asparaginyl-tRNA(Asn) + L-glutamate + ADP + phosphate + 2 H(+). Its function is as follows. Allows the formation of correctly charged Asn-tRNA(Asn) or Gln-tRNA(Gln) through the transamidation of misacylated Asp-tRNA(Asn) or Glu-tRNA(Gln) in organisms which lack either or both of asparaginyl-tRNA or glutaminyl-tRNA synthetases. The reaction takes place in the presence of glutamine and ATP through an activated phospho-Asp-tRNA(Asn) or phospho-Glu-tRNA(Gln). In Thermoanaerobacter sp. (strain X514), this protein is Aspartyl/glutamyl-tRNA(Asn/Gln) amidotransferase subunit B.